The sequence spans 320 residues: Cytochrome f (320 aa).

The N-terminal stretch at 1-35 is a signal peptide; sequence MQTRNTFSWIREEITRSISVSLIIYIITWASISSA. Tyr36, Cys56, Cys59, and His60 together coordinate heme. The helical transmembrane segment at 286 to 305 threads the bilayer; it reads VQGLLFFLGSVVLAQIFLVL.

Belongs to the cytochrome f family. In terms of assembly, the 4 large subunits of the cytochrome b6-f complex are cytochrome b6, subunit IV (17 kDa polypeptide, petD), cytochrome f and the Rieske protein, while the 4 small subunits are PetG, PetL, PetM and PetN. The complex functions as a dimer. It depends on heme as a cofactor.

The protein localises to the plastid. Its subcellular location is the chloroplast thylakoid membrane. In terms of biological role, component of the cytochrome b6-f complex, which mediates electron transfer between photosystem II (PSII) and photosystem I (PSI), cyclic electron flow around PSI, and state transitions. The sequence is that of Cytochrome f (petA) from Arabidopsis thaliana (Mouse-ear cress).